The primary structure comprises 652 residues: Beta-mannosyltransferase 1 (652 aa).

Residues 1 to 15 (MVDLFQWLKFYSMRR) are Cytoplasmic-facing. A helical transmembrane segment spans residues 16 to 34 (LGQVAITLVLLNLFVFLGY). Residues 35–652 (KFTPSTVIGS…LYQLQEEERS (618 aa)) lie on the Extracellular side of the membrane. N-linked (GlcNAc...) asparagine glycosylation occurs at Asn57. Residues 535–652 (PARYAKQMEN…LYQLQEEERS (118 aa)) adopt a coiled-coil conformation. A disordered region spans residues 536 to 621 (ARYAKQMENE…EAKENEAKKK (86 aa)).

Belongs to the BMT family.

Its subcellular location is the membrane. In terms of biological role, beta-mannosyltransferase involved in cell wall biosynthesis. Involved in the beta-mannosylation of outer chains of N-glycans. This chain is Beta-mannosyltransferase 1 (BMT1), found in Komagataella phaffii (strain ATCC 76273 / CBS 7435 / CECT 11047 / NRRL Y-11430 / Wegner 21-1) (Yeast).